Reading from the N-terminus, the 412-residue chain is Inositol polyphosphate-5-phosphatase A (412 aa).

C409 carries S-farnesyl cysteine lipidation. Residues 410 to 412 (VVQ) constitute a propeptide, removed in mature form.

This sequence belongs to the inositol 1,4,5-trisphosphate 5-phosphatase type I family. In terms of assembly, interacts with TASOR. In terms of processing, isoprenylation at Cys-409 is required for localization at the membrane. In terms of tissue distribution, predominantly expressed in heart, brain, and skeletal muscle. In brain; high level in Purkinje cells.

The protein resides in the cell membrane. The protein localises to the cell projection. Its subcellular location is the dendrite. It carries out the reaction 1D-myo-inositol 1,4,5-trisphosphate + H2O = 1D-myo-inositol 1,4-bisphosphate + phosphate. It catalyses the reaction 1D-myo-inositol 1,3,4,5-tetrakisphosphate + H2O = 1D-myo-inositol 1,3,4-trisphosphate + phosphate. Phosphatase that specifically hydrolyzes the 5-phosphate of inositol 1,4,5-trisphosphate to inositol 1,4-bisphosphate, and inositol 1,3,4,5-tetrasphosphate to inositol 1,3,4-trisphosphate. Plays a crucial role in the survival of cerebellar Purkinje cells. In Homo sapiens (Human), this protein is Inositol polyphosphate-5-phosphatase A.